Here is a 164-residue protein sequence, read N- to C-terminus: UPF0304 protein YfbU (164 aa).

This sequence belongs to the UPF0304 family.

The chain is UPF0304 protein YfbU from Salmonella choleraesuis (strain SC-B67).